Consider the following 1079-residue polypeptide: Extracellular calcium-sensing receptor (1079 aa).

The N-terminal stretch at 1-19 (MAWFGYCLALLALTWHSSA) is a signal peptide. The Extracellular portion of the chain corresponds to 20–610 (YGPDQRAQKK…KEIEFLAWTE (591 aa)). Residues 22 to 188 (PDQRAQKKGD…QFKSFLRTIP (167 aa)) are ligand-binding 1 (LB1). Cys-60 and Cys-101 are disulfide-bonded. Residue 66–70 (RGFRW) coordinates phosphate. Ca(2+) contacts are provided by Ile-81, Ser-84, Leu-87, and Leu-88. An N-linked (GlcNAc...) asparagine glycan is attached at Asn-90. Thr-100 is a Ca(2+) binding site. A glycan (N-linked (GlcNAc...) asparagine) is linked at Asn-130. Thr-145 contacts Ca(2+). Residues Ser-147, Ala-168, and Ser-170 each coordinate L-tryptophan. Residues Ser-170, Pro-188, Asp-190, Glu-231, and Asp-234 each contribute to the Ca(2+) site. The interval 189 to 324 (NDEHQATAMA…GGTIGFGLKA (136 aa)) is ligand-binding 2 (LB2). Disulfide bonds link Cys-236-Cys-561, Cys-358-Cys-395, Cys-437-Cys-449, Cys-542-Cys-562, Cys-546-Cys-565, Cys-568-Cys-582, and Cys-585-Cys-598. Positions 238 and 240 each coordinate spermine. 2 N-linked (GlcNAc...) asparagine glycosylation sites follow: Asn-261 and Asn-287. Glu-297 contributes to the Ca(2+) binding site. Glu-297 lines the L-tryptophan pocket. N-linked (GlcNAc...) asparagine glycosylation is present at Asn-386. 415-417 (RIS) is a binding site for phosphate. N-linked (GlcNAc...) asparagine glycosylation is found at Asn-446, Asn-468, and Asn-488. Tyr-489 is a Ca(2+) binding site. An N-linked (GlcNAc...) asparagine glycan is attached at Asn-541. The tract at residues 542 to 612 (CSRDCQAGTR…IEFLAWTEPF (71 aa)) is cysteine-rich (CR). Ca(2+) is bound at residue Gly-557. N-linked (GlcNAc...) asparagine glycosylation is present at Asn-594. Residues 611–636 (PFGIALTLFAVLGIFLTAFVLGVFIK) form a helical membrane-spanning segment. Residues 637-648 (FRNTPIVKATNR) are Cytoplasmic-facing. Positions 637 to 648 (FRNTPIVKATNR) are intracellular loop 1 (ICL1). Residues 649–668 (ELSYLLLFSLLCCFSSSLFF) form a helical membrane-spanning segment. At 669 to 674 (IGEPQD) the chain is on the extracellular side. Residues 675–698 (WTCRLRQPAFGISFVLCISCILVK) traverse the membrane as a helical segment. Over 699–722 (TNRVLLVFEAKIPTSFHRKWWGLN) the chain is Cytoplasmic. Positions 699–722 (TNRVLLVFEAKIPTSFHRKWWGLN) are intracellular loop 2 (ICL2). The helical transmembrane segment at 723–745 (LQFLLVFLCTFMQIVICIIWLYT) threads the bilayer. At 746–769 (APPSSYRNHELEDEIIFITCHEGS) the chain is on the extracellular side. A helical transmembrane segment spans residues 770-789 (LMALGSLIGYTCLLAAICFF). The Cytoplasmic segment spans residues 790–805 (FAFKSRKLPENFNEAK). The intracellular loop 3 (ICL3) stretch occupies residues 790 to 805 (FAFKSRKLPENFNEAK). Residues 806-828 (FITFSMLIFFIVWISFIPAYAST) traverse the membrane as a helical segment. Residues 829–832 (YGKF) lie on the Extracellular side of the membrane. A helical transmembrane segment spans residues 833–854 (VSAVEVIAILAASFGLLACIFF). Over 855 to 1079 (NKVYIILFKP…SSVTENILHS (225 aa)) the chain is Cytoplasmic. The tract at residues 855–1079 (NKVYIILFKP…SSVTENILHS (225 aa)) is C-terminus. Residues 880 to 900 (AFKVAARATLRRPNISRKRSS) form an interaction with RNF19A region. Thr-888 bears the Phosphothreonine mark. Positions 890–898 (RRPNISRKR) are arginine-rich retention motif. Residues 894-964 (ISRKRSSSLG…QQQPQQPRCK (71 aa)) are disordered. Residue Ser-899 is modified to Phosphoserine. Positions 900-918 (SSLGGSTGSIPSSSISSKS) are enriched in low complexity. Basic and acidic residues predominate over residues 919–931 (NSEDRFPQPERQK). Ser-920 is modified (phosphoserine). Positions 932 to 961 (QQQPLALTQQEQQQQPLTLQPQQQQQPQQP) are enriched in low complexity. Ser-1062 is subject to Phosphoserine.

It belongs to the G-protein coupled receptor 3 family. As to quaternary structure, homodimer; disulfide-linked. Interacts with VCP. Interacts with ARRB1. Post-translationally, phosphorylation at Thr-888 by PKC impairs coupling with G(q)/G(11) G-proteins, while it does not affect G(i)/G(o)-coupling. Phosphorylation at Ser-899 by PKA promote plasma membrane localization. In terms of processing, ubiquitinated by RNF19A; which induces proteasomal degradation. Epidermis, kidney and cartilage.

It localises to the cell membrane. In resting state, adopts an open conformation, anion-binding promoting the inactive configuration. Upon aromatic amino acid-binding, the groove in the extracellular venus flytrap module is closed, thereby inducing the formation of a novel homodimer interface between subunits. Calcium ions stabilize the active state by enhancing homodimer interactions between membrane-proximal domains to fully activate the receptor. Upon activation, the homodimer adopts an asymmetric configuration of the 7-transmembrane region that primes one protomer for G-protein coupling. G-protein binding expands the transmembrane dimer interface; the restriction imposed by the receptor dimer, in combination with intracellular loop 2 (ICL2), enables G-protein activation by facilitating conformational transition of G-protein alpha. Coupling to different classes of G-proteins results in distinct CASR-G-protein interfaces. In terms of biological role, G-protein-coupled receptor that senses changes in the extracellular concentration of calcium ions and plays a key role in maintaining calcium homeostasis. Senses fluctuations in the circulating calcium concentration: activated by elevated circulating calcium, leading to decreased parathyroid hormone (PTH) secretion in parathyroid glands. In kidneys, acts as a key regulator of renal tubular calcium resorption. Ligand binding causes a conformation change that triggers signaling via guanine nucleotide-binding proteins (G-proteins) and modulates the activity of downstream effectors. CASR is coupled with different G(q)/G(11), G(i)/G(o)- or G(s)-classes of G-proteins depending on the context. In the parathyroid and kidney, CASR signals through G(q)/G(11) and G(i)/G(o) G-proteins: G(q)/G(11) coupling activates phospholipase C-beta, releasing diacylglycerol (DAG) and inositol 1,4,5-trisphosphate (IP3) second messengers, while G(i)/G(o) coupling mediates inhibition of adenylate cyclase activity. The G-protein-coupled receptor activity is activated by a co-agonist mechanism: aromatic amino acids, such as Trp or Phe, act concertedly with divalent cations, such as calcium or magnesium, to achieve full receptor activation. Acts as an activator of the NLRP3 inflammasome via G(i)/G(o)-mediated signaling: down-regulation of cyclic AMP (cAMP) relieving NLRP3 inhibition by cAMP. Acts as a regulator of proton-sensing receptor GPR68 in a seesaw manner: CASR-mediated signaling inhibits GPR68 signaling in response to extracellular calcium, while GPR68 inhibits CASR in presence of extracellular protons. The sequence is that of Extracellular calcium-sensing receptor from Mus musculus (Mouse).